The sequence spans 165 residues: Putative inactive neutral ceramidase B (165 aa).

The protein belongs to the neutral ceramidase family. Ubiquitous. Expression is reduced with increasing age and in late-onset Alzheimer disease (LOAD) patients. This reduction is even more pronounced in patients with an affected mother.

This chain is Putative inactive neutral ceramidase B, found in Homo sapiens (Human).